Reading from the N-terminus, the 260-residue chain is Small ribosomal subunit protein uS2 (260 aa).

A disordered region spans residues V240–K260.

The protein belongs to the universal ribosomal protein uS2 family.

In Phytoplasma australiense, this protein is Small ribosomal subunit protein uS2.